A 330-amino-acid chain; its full sequence is ADP-L-glycero-D-manno-heptose-6-epimerase (330 aa).

NADP(+) is bound by residues 11–12 (FI), 32–33 (DN), Lys-39, Lys-54, 75–79 (EGACS), and Asn-92. Tyr-139 functions as the Proton acceptor in the catalytic mechanism. Lys-143 contacts NADP(+). Asn-168 is a substrate binding site. Residues Val-169 and Lys-177 each coordinate NADP(+). Residue Lys-177 is the Proton acceptor of the active site. Residues Arg-179, His-186, 200 to 203 (FGEY), Arg-213, and Tyr-292 contribute to the substrate site.

Belongs to the NAD(P)-dependent epimerase/dehydratase family. HldD subfamily. As to quaternary structure, homopentamer. Requires NADP(+) as cofactor.

It carries out the reaction ADP-D-glycero-beta-D-manno-heptose = ADP-L-glycero-beta-D-manno-heptose. The protein operates within nucleotide-sugar biosynthesis; ADP-L-glycero-beta-D-manno-heptose biosynthesis; ADP-L-glycero-beta-D-manno-heptose from D-glycero-beta-D-manno-heptose 7-phosphate: step 4/4. In terms of biological role, catalyzes the interconversion between ADP-D-glycero-beta-D-manno-heptose and ADP-L-glycero-beta-D-manno-heptose via an epimerization at carbon 6 of the heptose. This Paraburkholderia phytofirmans (strain DSM 17436 / LMG 22146 / PsJN) (Burkholderia phytofirmans) protein is ADP-L-glycero-D-manno-heptose-6-epimerase.